The sequence spans 521 residues: Exodeoxyribonuclease 7 large subunit (521 aa).

Residues 494–521 (ATSGAARPKPAAKPSTKAKEPGNQGSLF) are disordered. Over residues 498–508 (AARPKPAAKPS) the composition is skewed to low complexity.

The protein belongs to the XseA family. As to quaternary structure, heterooligomer composed of large and small subunits.

It is found in the cytoplasm. The enzyme catalyses Exonucleolytic cleavage in either 5'- to 3'- or 3'- to 5'-direction to yield nucleoside 5'-phosphates.. In terms of biological role, bidirectionally degrades single-stranded DNA into large acid-insoluble oligonucleotides, which are then degraded further into small acid-soluble oligonucleotides. This Mesorhizobium japonicum (strain LMG 29417 / CECT 9101 / MAFF 303099) (Mesorhizobium loti (strain MAFF 303099)) protein is Exodeoxyribonuclease 7 large subunit.